The chain runs to 64 residues: Conotoxin Ca5.3 (64 aa).

A signal peptide spans methionine 1–alanine 22. Residues glutamine 23–asparagine 48 constitute a propeptide that is removed on maturation. The residue at position 61 (isoleucine 61) is an Isoleucine amide.

This sequence belongs to the conotoxin T superfamily. In terms of processing, contains 2 disulfide bonds that can be either 'C1-C3, C2-C4' or 'C1-C4, C2-C3', since these disulfide connectivities have been observed for conotoxins with cysteine framework V (for examples, see AC P0DQQ7 and AC P81755). In terms of tissue distribution, expressed by the venom duct.

The protein resides in the secreted. In Conus caracteristicus (Characteristic cone), this protein is Conotoxin Ca5.3.